The sequence spans 653 residues: Chaperone protein dnaK3 (653 aa).

Phosphothreonine; by autocatalysis is present on T197.

The protein belongs to the heat shock protein 70 family.

Its function is as follows. Acts as a chaperone. In Nostoc sp. (strain PCC 7120 / SAG 25.82 / UTEX 2576), this protein is Chaperone protein dnaK3 (dnaK3).